Reading from the N-terminus, the 293-residue chain is Triosephosphate isomerase (293 aa).

25–27 (NWK) contributes to the substrate binding site. H117 acts as the Electrophile in catalysis. E218 acts as the Proton acceptor in catalysis.

It belongs to the triosephosphate isomerase family. In terms of assembly, homodimer.

The protein resides in the cytoplasm. The catalysed reaction is D-glyceraldehyde 3-phosphate = dihydroxyacetone phosphate. Its pathway is carbohydrate biosynthesis; gluconeogenesis. It functions in the pathway carbohydrate degradation; glycolysis; D-glyceraldehyde 3-phosphate from glycerone phosphate: step 1/1. Involved in the gluconeogenesis. Catalyzes stereospecifically the conversion of dihydroxyacetone phosphate (DHAP) to D-glyceraldehyde-3-phosphate (G3P). The polypeptide is Triosephosphate isomerase (Tropheryma whipplei (strain Twist) (Whipple's bacillus)).